A 417-amino-acid chain; its full sequence is Membrane protein UL43 (417 aa).

Residues 1 to 21 are disordered; it reads MLRNDSHRAVSPEDGQGRVDD. Transmembrane regions (helical) follow at residues 57–77, 90–110, 119–139, 146–166, and 175–195; these read GPYA…LGFM, IYAW…SLGE, APGP…LLVL, LFLL…VGGL, and WWIG…GPGA. The disordered stretch occupies residues 217 to 254; it reads AGESLSRRPPEDPERPGVPGPPSPPTPQRSHGPPADEV. The segment covering 221-231 has biased composition (basic and acidic residues); it reads LSRRPPEDPER. Pro residues predominate over residues 232–243; sequence PGVPGPPSPPTP. 5 helical membrane passes run 263–283, 291–311, 323–343, 348–368, and 389–409; these read ENVW…VKTV, PGPG…AVAL, LTDP…GLVF, VVVY…VLGL, and GLFF…CPPG.

It belongs to the alphaherpesvirinae HHV-1 UL43 family.

It localises to the membrane. In Human herpesvirus 1 (strain 17) (HHV-1), this protein is Membrane protein UL43.